Consider the following 803-residue polypeptide: Ribonuclease II, chloroplastic/mitochondrial (803 aa).

A chloroplast and mitochondrion-targeting transit peptide spans 1-35 (MMSVRAINGCSIIRTATSAGGPPVSLFRHRIQRLR). An RNB domain is found at 399 to 694 (RIDLTHLKVY…AHYQIKAFLR (296 aa)).

It belongs to the RNR ribonuclease family. In terms of tissue distribution, expressed in seedlings, roots, leaves and flowers.

It is found in the mitochondrion. The protein localises to the plastid. The protein resides in the chloroplast. It carries out the reaction Exonucleolytic cleavage in the 3'- to 5'-direction to yield nucleoside 5'-phosphates.. In terms of biological role, 3'-5' exoribonuclease that catalyzes 3' maturation of chloroplast and mitochondrion ribosomal RNAs; degrades short nucleotidic extensions to generate the mature 3'-ends. Involved in the maturation of 23S, 16S and 5S rRNAs. This is Ribonuclease II, chloroplastic/mitochondrial (RNR1) from Arabidopsis thaliana (Mouse-ear cress).